The chain runs to 881 residues: DNA mismatch repair protein MutS (881 aa).

612–619 lines the ATP pocket; that stretch reads GPNMAGKS.

This sequence belongs to the DNA mismatch repair MutS family.

In terms of biological role, this protein is involved in the repair of mismatches in DNA. It is possible that it carries out the mismatch recognition step. This protein has a weak ATPase activity. The chain is DNA mismatch repair protein MutS from Clostridium tetani (strain Massachusetts / E88).